The following is a 291-amino-acid chain: MGVVVVNVMTLLDQNNALPRTSVDASPALWSFLLRQCRILASEPLGTPVVVRPANLRRLAEPLMDLPKPTRPIVRTRSCRCPPNTTTGLFAEDSPLESTEVVDAVACFRLLHRDQPSPPRLYHLWVVGAADLCVPFLEYAQKIRLGVRFIAIKTPDAWVGEPWAVPTRFLPEWTVAWTPFPAAPNHPLETLLSRYEYQYGVVLPGTNGRERDCMRWLRSLIALHKPHPATPGPLTTSHPVRRPCCACMGMPEVPDEQPTSPGRGPQETDPLIAVRGERPRLPHICYPVTTL.

Gly-2 is subject to N-acetylglycine; by host; partial. A disordered region spans residues 251–270 (PEVPDEQPTSPGRGPQETDP).

It belongs to the herpesviridae HHV-1 US2 protein family. Interacts with host KRT18.

The protein resides in the host cytoplasm. Its subcellular location is the host nucleus. In Homo sapiens (Human), this protein is Protein US2.